We begin with the raw amino-acid sequence, 268 residues long: Proenkephalin-A (268 aa).

Residues 1–24 (MARFLRLCTWLLVLGSCLLATVQA) form the signal peptide. 3 disulfides stabilise this stretch: cysteine 26-cysteine 48, cysteine 30-cysteine 52, and cysteine 33-cysteine 65. The interval 162–185 (GTGDNRAREGRHQESTDNDDNMSK) is disordered. The segment covering 166 to 176 (NRAREGRHQES) has biased composition (basic and acidic residues). 2 propeptides span residues 197–208 (SPQVEDEAKELQ) and 218–228 (VGRPEWWMDYQ). Phosphoserine is present on serine 252.

The protein belongs to the opioid neuropeptide precursor family. Proenkephalin-A is cleaved by CTSL to generate Met-enkephalin. Post-translationally, processed and degraded by ACE. In terms of processing, probably cleaved by ACE. Processed by ACE to generate Met-enkephalin in the nucleus accumbens of the brain. Post-translationally, the N-terminal domain contains 6 conserved cysteines thought to be involved in disulfide bonding and/or processing.

The protein localises to the cytoplasmic vesicle. It is found in the secretory vesicle. Its subcellular location is the chromaffin granule lumen. The protein resides in the secreted. In terms of biological role, neuropeptide that competes with and mimic the effects of opiate drugs. They play a role in a number of physiologic functions, including pain perception and responses to stress. Met-enkephalin-Arg-Phe neuropeptide acts as a strong ligand of Mu-type opioid receptor OPRM1. Met-enkephalin-Arg-Phe-binding to OPRM1 in the nucleus accumbens of the brain increases activation of OPRM1, leading to long-term synaptic depression of glutamate release. Functionally, increases glutamate release in the striatum and decreases GABA concentration in the striatum. Its function is as follows. Increases glutamate release in the striatum. The protein is Proenkephalin-A (PENK) of Mesocricetus auratus (Golden hamster).